Here is a 257-residue protein sequence, read N- to C-terminus: Snake venom serine protease Haly-2 (257 aa).

Positions 1-18 are cleaved as a signal peptide; sequence MVLIRVLANLLILQLSYA. Positions 19–24 are excised as a propeptide; it reads QKSSEL. Residues 25–248 enclose the Peptidase S1 domain; sequence IIGGDECNIN…HLEWIRSIIA (224 aa). 6 disulfide bridges follow: cysteine 31-cysteine 162, cysteine 49-cysteine 65, cysteine 97-cysteine 255, cysteine 141-cysteine 209, cysteine 173-cysteine 188, and cysteine 199-cysteine 224. Histidine 64 serves as the catalytic Charge relay system. N-linked (GlcNAc...) asparagine glycosylation is present at asparagine 100. Aspartate 109 acts as the Charge relay system in catalysis. The active-site Charge relay system is the serine 203.

It belongs to the peptidase S1 family. Snake venom subfamily. Monomer. As to expression, expressed by the venom gland.

It localises to the secreted. Functionally, snake venom serine protease that may act in the hemostasis system of the prey. The chain is Snake venom serine protease Haly-2 from Gloydius brevicauda (Korean slamosa snake).